The primary structure comprises 78 residues: MSEVLPYGDEKLSPYGDGGDVGQVFSCRLQDTNNFFGAGQNKRPPKLGQIGRSKRVVIEDDRIDDVLKNMTDKAPPGV.

A CAMK2 inhibitory domain region spans residues 41–68; it reads NKRPPKLGQIGRSKRVVIEDDRIDDVLK.

It belongs to the CAMK2N family. As to quaternary structure, interacts with CAMK2B; the presence of Ca(2+)/calmodulin increases the interaction but is not essential. Interacts with CAMK2A; this interaction requires CAMK2A activation by Ca(2+).

It localises to the synapse. The protein localises to the cell projection. It is found in the dendrite. The protein resides in the postsynaptic density. Its function is as follows. Potent and specific inhibitor of CaM-kinase II (CAMK2). Plays a role in the maintenance of long-term retrieval-induced memory in response to contextual fear. Modulates blood pressure and vascular reactivity via regulation of CAMK2 activity in addition to regulation of left ventricular mass. Mediates the NLRP3 inflammasome in cardiomyocytes via acting as an inhibitor of the MAPK14/p38 and MAPK8/JNK pathways, thereby regulating ventricular remodeling and cardiac rhythm post-myocardial infarction. Negatively effects insulin sensitivity and promotes lipid formation in adipose tissues independent of CAMK2 signaling. This chain is Calcium/calmodulin-dependent protein kinase II inhibitor 1 (CAMK2N1), found in Bos taurus (Bovine).